The sequence spans 101 residues: Urease subunit beta (101 aa).

This sequence belongs to the urease beta subunit family. As to quaternary structure, heterotrimer of UreA (gamma), UreB (beta) and UreC (alpha) subunits. Three heterotrimers associate to form the active enzyme.

The protein localises to the cytoplasm. It carries out the reaction urea + 2 H2O + H(+) = hydrogencarbonate + 2 NH4(+). It participates in nitrogen metabolism; urea degradation; CO(2) and NH(3) from urea (urease route): step 1/1. The polypeptide is Urease subunit beta (Paraburkholderia phytofirmans (strain DSM 17436 / LMG 22146 / PsJN) (Burkholderia phytofirmans)).